The following is a 575-amino-acid chain: Lysine--tRNA ligase (575 aa).

Positions 412 and 419 each coordinate Mg(2+).

The protein belongs to the class-II aminoacyl-tRNA synthetase family. In terms of assembly, homodimer. Mg(2+) is required as a cofactor.

The protein resides in the cytoplasm. It carries out the reaction tRNA(Lys) + L-lysine + ATP = L-lysyl-tRNA(Lys) + AMP + diphosphate. The chain is Lysine--tRNA ligase from Bacteroides fragilis (strain YCH46).